Consider the following 945-residue polypeptide: Glutamyl aminopeptidase (945 aa).

Topologically, residues 1-18 (MNFAEEEPSKKYCIKGKH) are cytoplasmic. Residues 19–39 (VAIICATVVAVGLIVGLSVGL) form a helical; Signal-anchor for type II membrane protein membrane-spanning segment. The Extracellular portion of the chain corresponds to 40 to 945 (TRSCEPGTTP…SISEWFTSMP (906 aa)). The interval 45-77 (PGTTPAPSNPPPHTSTALPPQDQNVCPDSDDES) is disordered. N-linked (GlcNAc...) asparagine glycans are attached at residues Asn116 and Asn189. Glu215 serves as a coordination point for substrate. N-linked (GlcNAc...) asparagine glycans are attached at residues Asn236 and Asn316. 349 to 353 (GAMEN) contributes to the substrate binding site. His385 is a Zn(2+) binding site. Glu386 acts as the Proton acceptor in catalysis. His389 and Glu408 together coordinate Zn(2+). Residues Asn546, Asn584, Asn601, Asn640, Asn669, Asn754, Asn766, and Asn792 are each glycosylated (N-linked (GlcNAc...) asparagine). Arg878 is a substrate binding site.

Belongs to the peptidase M1 family. In terms of assembly, homodimer; disulfide-linked. Zn(2+) serves as cofactor. In terms of tissue distribution, highest expression in kidney proximal tubules and ileum enterocytes. High expression also detected in liver and pituitary. Lower levels in heart, adrenal gland and brain. Not detected in aorta, lung or spleen. In heart, higher levels in ventricle than in atrium. Also expressed in glomerular mesangial cells.

The protein resides in the cell membrane. The enzyme catalyses Release of N-terminal glutamate (and to a lesser extent aspartate) from a peptide.. Its activity is regulated as follows. Substrate specificity is modulated by calcium which enhances the enzymatic activity for cleavage of acidic residues while reducing its activity with basic residues. Inhibited by aminopeptidase inhibitors amastatin and bestatin. Functionally, regulates central hypertension through its calcium-modulated preference to cleave N-terminal acidic residues from peptides such as angiotensin II. The chain is Glutamyl aminopeptidase (Enpep) from Rattus norvegicus (Rat).